We begin with the raw amino-acid sequence, 346 residues long: Elongation factor Ts (346 aa).

The segment at 80–83 is involved in Mg(2+) ion dislocation from EF-Tu; it reads TDFV.

The protein belongs to the EF-Ts family.

It is found in the cytoplasm. Its function is as follows. Associates with the EF-Tu.GDP complex and induces the exchange of GDP to GTP. It remains bound to the aminoacyl-tRNA.EF-Tu.GTP complex up to the GTP hydrolysis stage on the ribosome. The sequence is that of Elongation factor Ts from Streptococcus agalactiae serotype Ia (strain ATCC 27591 / A909 / CDC SS700).